The primary structure comprises 331 residues: UPF0194 membrane protein YbhG (331 aa).

A signal peptide spans 1–19 (MKKPVVIGLAIAAIVAVIA). Residues 107–208 (EEIAQAAAAV…LDLQDTTLIA (102 aa)) adopt a coiled-coil conformation.

This sequence belongs to the UPF0194 family.

Its subcellular location is the periplasm. This is UPF0194 membrane protein YbhG from Salmonella gallinarum (strain 287/91 / NCTC 13346).